The primary structure comprises 341 residues: RNA 3'-terminal phosphate cyclase (341 aa).

Residues Q102 and 283 to 287 (HLADQ) each bind ATP. Residue H308 is the Tele-AMP-histidine intermediate of the active site.

The protein belongs to the RNA 3'-terminal cyclase family. Type 1 subfamily.

Its subcellular location is the cytoplasm. The enzyme catalyses a 3'-end 3'-phospho-ribonucleotide-RNA + ATP = a 3'-end 2',3'-cyclophospho-ribonucleotide-RNA + AMP + diphosphate. Its function is as follows. Catalyzes the conversion of 3'-phosphate to a 2',3'-cyclic phosphodiester at the end of RNA. The mechanism of action of the enzyme occurs in 3 steps: (A) adenylation of the enzyme by ATP; (B) transfer of adenylate to an RNA-N3'P to produce RNA-N3'PP5'A; (C) and attack of the adjacent 2'-hydroxyl on the 3'-phosphorus in the diester linkage to produce the cyclic end product. The biological role of this enzyme is unknown but it is likely to function in some aspects of cellular RNA processing. This Ectopseudomonas mendocina (strain ymp) (Pseudomonas mendocina) protein is RNA 3'-terminal phosphate cyclase.